Here is a 1855-residue protein sequence, read N- to C-terminus: Unconventional myosin-Va (1855 aa).

At A2 the chain carries N-acetylalanine. A Myosin N-terminal SH3-like domain is found at 8 to 60; the sequence is TKFARVWIPDPEEVWKSAELLKDYKPGDKVLLLHLEEGKDLEYHLDPKTKELP. One can recognise a Myosin motor domain in the interval 69–763; it reads VGENDLTALS…QVAYLEKLRA (695 aa). ATP is bound at residue 163–170; the sequence is GESGAGKT. A disordered region spans residues 598 to 631; it reads AISPTSATSSGRTPLTRTPAKPTKGRPGQMAKEH. Residue S600 is modified to Phosphoserine. Residues 600–613 show a composition bias toward polar residues; that stretch reads SPTSATSSGRTPLT. The actin-binding stretch occupies residues 643 to 665; that stretch reads LHLLMETLNATTPHYVRCIKPND. IQ domains follow at residues 766 to 788, 789 to 818, 814 to 836, 837 to 861, 862 to 883, and 885 to 914; these read LRAACIRIQKTIRGWLLRKKYLR, MRKAAITMQRYVRGYQARCYAKFLRRTKAA, RTKAATIIQKYWRMYVVRRRYKI, RRAATIVLQSYLRGFLARNRYRKIL, REHKAVIIQKRVRGWLARTHYK, and SMHAIIYLQCCFRRMMAKRELKKLKIEARS. 2 coiled-coil regions span residues 914 to 1237 and 1338 to 1445; these read SVER…APEV and VYEG…ELEV. Phosphothreonine is present on T1032. Phosphoserine occurs at positions 1452 and 1652. Residues 1534–1810 enclose the Dilute domain; it reads TSTINSIKKV…IRTIQMRLRD (277 aa). T1760 is modified (phosphothreonine).

Belongs to the TRAFAC class myosin-kinesin ATPase superfamily. Myosin family. As to quaternary structure, may be a homodimer, which associates with multiple calmodulin or myosin light chains. Interacts with RIPL2, the interaction is required for its role in dendrite formation. Interacts with MLPH. Interacts with SYTL4. Interacts with MYRIP. Interacts with RAB10; mediates the transport to the plasma membrane of SLC2A4/GLUT4 storage vesicles. Interacts with FMR1; this interaction occurs in association with polyribosome. As to expression, detected in melanocytes.

It catalyses the reaction ATP + H2O = ADP + phosphate + H(+). Functionally, processive actin-based motor that can move in large steps approximating the 36-nm pseudo-repeat of the actin filament. Can hydrolyze ATP in the presence of actin, which is essential for its function as a motor protein. Involved in melanosome transport. Also mediates the transport of vesicles to the plasma membrane. May also be required for some polarization process involved in dendrite formation. The polypeptide is Unconventional myosin-Va (MYO5A) (Homo sapiens (Human)).